A 338-amino-acid chain; its full sequence is Aspartate carbamoyltransferase catalytic subunit (338 aa).

Carbamoyl phosphate is bound by residues R59 and T60. K87 serves as a coordination point for L-aspartate. Residues R109, H142, and Q145 each coordinate carbamoyl phosphate. The L-aspartate site is built by R182 and R253. Carbamoyl phosphate contacts are provided by G294 and P295.

It belongs to the aspartate/ornithine carbamoyltransferase superfamily. ATCase family. Heterododecamer (2C3:3R2) of six catalytic PyrB chains organized as two trimers (C3), and six regulatory PyrI chains organized as three dimers (R2).

It carries out the reaction carbamoyl phosphate + L-aspartate = N-carbamoyl-L-aspartate + phosphate + H(+). Its pathway is pyrimidine metabolism; UMP biosynthesis via de novo pathway; (S)-dihydroorotate from bicarbonate: step 2/3. In terms of biological role, catalyzes the condensation of carbamoyl phosphate and aspartate to form carbamoyl aspartate and inorganic phosphate, the committed step in the de novo pyrimidine nucleotide biosynthesis pathway. The protein is Aspartate carbamoyltransferase catalytic subunit of Prochlorococcus marinus (strain MIT 9515).